The sequence spans 506 residues: MEEFKRNLELDRSQQHDFIYPLIFQEYIYALAHDRGLNRSIFLENTGYDNKSSLLIVKRLITHLITQMYQQNRFLFSGNDSNQKKFFGDNTNLYSQMIFEGFAVVVEIPFYLRLLSFLEGKERVKSHNLRSIHSIFPFLEDKFSHLVYVLDILISHPIHLEIVVQTLRYWVKDASSLHLLRFFLHEYPIWNSLITPKKSSFSFSIRNQRFFLFLYNFHVCEYESIFVFLRNQSSHLRSISSETFLERISFYRKIELEVFAKDFKAILWVFKEPFLHYVRYRGKAILASKGTSLLMNKWKYYLVNFWQCYFYMWSQPRRIHINQLSNHSLDFLGYLSTVRLKPLMVRSQMIENSFLIENASKKFDTLMPITPMIGSLSKAKFCNVLGHPMSKPVWAALSDSDIIERFGRIYRNLSHYYSGSLKKMSLYRIKYILRLSCARTLARKHKSTVRAFLKRLGVGLLEEFFTEEEQVFYLTFAKASSNSGELYRRRVWYLDIICINDLANYE.

It belongs to the intron maturase 2 family. MatK subfamily.

The protein localises to the plastid. It is found in the chloroplast. In terms of biological role, usually encoded in the trnK tRNA gene intron. Probably assists in splicing its own and other chloroplast group II introns. This chain is Maturase K, found in Rhododendron tomentosum (Marsh Labrador tea).